A 348-amino-acid polypeptide reads, in one-letter code: tRNA N6-adenosine threonylcarbamoyltransferase (348 aa).

Fe cation is bound by residues histidine 116 and histidine 120. Substrate-binding positions include 138-142, aspartate 171, glycine 184, aspartate 188, and asparagine 277; that span reads QVSGG. Aspartate 309 provides a ligand contact to Fe cation.

The protein belongs to the KAE1 / TsaD family. Fe(2+) serves as cofactor.

The protein localises to the cytoplasm. The catalysed reaction is L-threonylcarbamoyladenylate + adenosine(37) in tRNA = N(6)-L-threonylcarbamoyladenosine(37) in tRNA + AMP + H(+). Required for the formation of a threonylcarbamoyl group on adenosine at position 37 (t(6)A37) in tRNAs that read codons beginning with adenine. Is involved in the transfer of the threonylcarbamoyl moiety of threonylcarbamoyl-AMP (TC-AMP) to the N6 group of A37, together with TsaE and TsaB. TsaD likely plays a direct catalytic role in this reaction. This is tRNA N6-adenosine threonylcarbamoyltransferase from Lactobacillus gasseri (strain ATCC 33323 / DSM 20243 / BCRC 14619 / CIP 102991 / JCM 1131 / KCTC 3163 / NCIMB 11718 / NCTC 13722 / AM63).